Consider the following 282-residue polypeptide: MSIKTIQLGDIAIANDKPFVLFGGMNVLESRDLAMSIAEKYLEVTQKLGIPYVFKASFDKANRSSINSYRGPGMEEGLKIFQEIKDTFNVPLITDVHEPHQCAPVAEVVDIIQLPAFLARQTDLVIAMARTGAIINVKKPQFLAPHEMRHIVKKFNEAGNDEIILCERGSCFGYNNLVVDMLGMDEMKQSGYPVIFDATHALQRPGGREDSAGGRRAQATELARSGMALGLAGLFIEAHPDPDNAKCDGPCALPLHQLEAYLSQMKAVDDLVKSFPALDTSK.

The protein belongs to the KdsA family.

The protein localises to the cytoplasm. The catalysed reaction is D-arabinose 5-phosphate + phosphoenolpyruvate + H2O = 3-deoxy-alpha-D-manno-2-octulosonate-8-phosphate + phosphate. The protein operates within carbohydrate biosynthesis; 3-deoxy-D-manno-octulosonate biosynthesis; 3-deoxy-D-manno-octulosonate from D-ribulose 5-phosphate: step 2/3. Its pathway is bacterial outer membrane biogenesis; lipopolysaccharide biosynthesis. This chain is 2-dehydro-3-deoxyphosphooctonate aldolase, found in Shewanella amazonensis (strain ATCC BAA-1098 / SB2B).